We begin with the raw amino-acid sequence, 350 residues long: Formimidoylglutamase (350 aa).

6 residues coordinate Mn(2+): His-130, Asp-165, His-167, Asp-169, Asp-269, and Asp-271.

Belongs to the arginase family. Mn(2+) serves as cofactor.

The catalysed reaction is N-formimidoyl-L-glutamate + H2O = formamide + L-glutamate. It participates in amino-acid degradation; L-histidine degradation into L-glutamate; L-glutamate from N-formimidoyl-L-glutamate (hydrolase route): step 1/1. Its function is as follows. Catalyzes the conversion of N-formimidoyl-L-glutamate to L-glutamate and formamide. The protein is Formimidoylglutamase of Aliivibrio fischeri (strain ATCC 700601 / ES114) (Vibrio fischeri).